The following is a 114-amino-acid chain: Histone H3-6 (114 aa).

Positions 1 to 17 are enriched in basic residues; it reads NTGGKAPRKHIAHKQAK. Residues 1 to 32 are disordered; it reads NTGGKAPRKHIAHKQAKKSSAAAATGGVKKPH. Residues 18–28 are compositionally biased toward low complexity; the sequence is KSSAAAATGGV.

This sequence belongs to the histone H3 family. In terms of assembly, the nucleosome is a histone octamer containing two molecules each of H2A, H2B, H3 and H4 assembled in one H3-H4 heterotetramer and two H2A-H2B heterodimers. The octamer wraps approximately 147 bp of DNA.

The protein localises to the nucleus. Its subcellular location is the chromosome. Its function is as follows. Core component of nucleosome. Nucleosomes wrap and compact DNA into chromatin, limiting DNA accessibility to the cellular machineries which require DNA as a template. Histones thereby play a central role in transcription regulation, DNA repair, DNA replication and chromosomal stability. DNA accessibility is regulated via a complex set of post-translational modifications of histones, also called histone code, and nucleosome remodeling. The polypeptide is Histone H3-6 (H3-6) (Stylonychia lemnae (Ciliate)).